An 819-amino-acid chain; its full sequence is Nuclear pore complex protein Nup93 (819 aa).

At Thr-49 the chain carries Phosphothreonine. Phosphoserine occurs at positions 52, 66, 72, 75, 80, 430, and 767.

It belongs to the nucleoporin interacting component (NIC) family. Part of the nuclear pore complex (NPC). Component of the p62 complex, a complex composed of NUP62 and NUP54. Forms a complex with NUP35, NUP155, NUP205 and lamin B; the interaction with NUP35 is direct. Does not interact with TPR. Interacts with SMAD4 and IPO7; translocates SMAD4 to the nucleus through the NPC upon BMP7 stimulation resulting in activation of SMAD4 signaling.

It localises to the nucleus membrane. Its subcellular location is the nucleus. It is found in the nuclear pore complex. The protein resides in the nucleus envelope. In terms of biological role, plays a role in the nuclear pore complex (NPC) assembly and/or maintenance. May anchor nucleoporins, but not NUP153 and TPR, to the NPC. During renal development, regulates podocyte migration and proliferation through SMAD4 signaling. This chain is Nuclear pore complex protein Nup93 (NUP93), found in Bos taurus (Bovine).